Consider the following 200-residue polypeptide: Ras-related protein Rab-7b (200 aa).

GTP-binding positions include 15–22, 34–40, 63–67, 124–127, and 154–155; these read GALGVGKT, YEDYQTT, DTGGQ, NKID, and AK. 2 consecutive short sequence motifs (switch) follow at residues 28-41 and 67-82; these read YVHKTFYEDYQTTL and QERFRSMVSTFYKGSD. At Ser-186 the chain carries Phosphoserine. S-geranylgeranyl cysteine attachment occurs at residues Cys-199 and Cys-200.

This sequence belongs to the small GTPase superfamily. Rab family.

Its subcellular location is the late endosome. The protein localises to the lysosome. The protein resides in the golgi apparatus. It localises to the trans-Golgi network. It is found in the cytoplasmic vesicle. Its subcellular location is the phagosome. The protein localises to the phagosome membrane. Functionally, controls vesicular trafficking from endosomes to the trans-Golgi network (TGN). Acts as a negative regulator of TLR9 signaling and can suppress TLR9-triggered TNFA, IL6, and IFNB production in macrophages by promoting TLR9 lysosomal degradation. Also negatively regulates TLR4 signaling in macrophages by promoting lysosomal degradation of TLR4. Promotes megakaryocytic differentiation by increasing NF-kappa-B-dependent IL6 production and subsequently enhancing the association of STAT3 with GATA1. Not involved in the regulation of the EGF- and EGFR degradation pathway. The chain is Ras-related protein Rab-7b (RAB7B) from Bos taurus (Bovine).